Here is a 430-residue protein sequence, read N- to C-terminus: Glutamyl-tRNA reductase (430 aa).

Substrate-binding positions include 50–53, S108, 113–115, and Q119; these read TCNR and EPQ. C51 serves as the catalytic Nucleophile. 188 to 193 provides a ligand contact to NADP(+); that stretch reads GAGEMA.

This sequence belongs to the glutamyl-tRNA reductase family. In terms of assembly, homodimer.

The catalysed reaction is (S)-4-amino-5-oxopentanoate + tRNA(Glu) + NADP(+) = L-glutamyl-tRNA(Glu) + NADPH + H(+). It functions in the pathway porphyrin-containing compound metabolism; protoporphyrin-IX biosynthesis; 5-aminolevulinate from L-glutamyl-tRNA(Glu): step 1/2. Its function is as follows. Catalyzes the NADPH-dependent reduction of glutamyl-tRNA(Glu) to glutamate 1-semialdehyde (GSA). The protein is Glutamyl-tRNA reductase of Lawsonia intracellularis (strain PHE/MN1-00).